The sequence spans 407 residues: Na(+)-translocating NADH-quinone reductase subunit F (407 aa).

A helical transmembrane segment spans residues 3–23 (ITLGIAMFTVIVLALAVLILF). Positions 32–126 (GDITIEINDD…SMKIELPEEV (95 aa)) constitute a 2Fe-2S ferredoxin-type domain. Residues Cys-69, Cys-75, Cys-78, and Cys-110 each contribute to the [2Fe-2S] cluster site. The region spanning 129–269 (VKKWECTVIS…SGPFGEFFAK (141 aa)) is the FAD-binding FR-type domain.

It belongs to the NqrF family. As to quaternary structure, composed of six subunits; NqrA, NqrB, NqrC, NqrD, NqrE and NqrF. [2Fe-2S] cluster serves as cofactor. It depends on FAD as a cofactor.

It localises to the cell inner membrane. The enzyme catalyses a ubiquinone + n Na(+)(in) + NADH + H(+) = a ubiquinol + n Na(+)(out) + NAD(+). Functionally, NQR complex catalyzes the reduction of ubiquinone-1 to ubiquinol by two successive reactions, coupled with the transport of Na(+) ions from the cytoplasm to the periplasm. The first step is catalyzed by NqrF, which accepts electrons from NADH and reduces ubiquinone-1 to ubisemiquinone by a one-electron transfer pathway. This Histophilus somni (strain 129Pt) (Haemophilus somnus) protein is Na(+)-translocating NADH-quinone reductase subunit F.